The sequence spans 905 residues: MTNPSPKLTPMFEQYLRIKEDYPDALLFYRMGDFYELFFDDAETTARELQIALTCRNPNAELKAPMCGVPYHAVEGYISQLLDKGYRVAICEQIEDPKEAKGLVKRAVTRVLTPGTVIDDANLDAKEHNYLGALFWNQDAEAGAFAWVDVSTGEWSGLYSRKLAELWQWAQKMAPRELLLPEGVDTPAMATLGTTQTVRVPARSHFDLKSGTERVMRAQGVADLGSLGLEGKPELVRACAALLAYLAQTQKQELSHLAPFKPLNLGRHLIIDEVTERNLELFHRLDGRKGPGTLWHILDRTLTPMGGRLLEERMHHPWREAGPIRETQQVVEWLFQDDVRREALRTALDLVYDLERLSTRIFLNRATPKDFIALRQSLSALPAVRATLERPANPEGTYPTDAETSGDTLPKPLSDMLSAWDDLADYADLLRRALTDNPPHLVTEGGLFRPGFDPDLDELLDLAEHGEARLQELLAEEQTVSGLPKLKLGYNRVFGYFFELSRAGADSVPEHFVRRQTLANAERFTTERLKELEEKLVSATDRRKTLEYRLFQSLRDTVAEARPRVLFMADMLAHLDFWQSLADVARRNGWVRPDVHTGHDIVIREGRHPVVEAMQGSASFVPNDLRMDEKRRLLLITGPNMAGKSTVLRQTAIICLLAQMGAFVPAREASIGIADRIFSRVGASDNLAQGQSTFMVEMMETARILRQASKRSLVILDEIGRGTSTFDGMALAWAVVEELTRRAGGGIRTLFATHYHEITSLEGRIPGVHNMNIAIREWNGDIVFLRRLVPGPADKSYGIEVARLAGVPHSVVQRARELLADLERTRDAARGTNSAPSRQTLPGLDLPSKQEQVDTIVAPPPCSGVEHPLLVALRDIDTDDMTPLEALKRITEWKQLWGTTREDRS.

Residues 388–410 (LERPANPEGTYPTDAETSGDTLP) form a disordered region. Position 638 to 645 (638 to 645 (GPNMAGKS)) interacts with ATP. Residues 826 to 847 (RDAARGTNSAPSRQTLPGLDLP) are disordered. The span at 831 to 840 (GTNSAPSRQT) shows a compositional bias: polar residues.

Belongs to the DNA mismatch repair MutS family.

In terms of biological role, this protein is involved in the repair of mismatches in DNA. It is possible that it carries out the mismatch recognition step. This protein has a weak ATPase activity. The chain is DNA mismatch repair protein MutS from Nitratidesulfovibrio vulgaris (strain DP4) (Desulfovibrio vulgaris).